A 304-amino-acid chain; its full sequence is Thyroxine 5-deiodinase (304 aa).

The interval methionine 1–glycine 22 is disordered. Over methionine 1–serine 44 the chain is Cytoplasmic. The helical; Signal-anchor for type II membrane protein transmembrane segment at cysteine 45 to isoleucine 67 threads the bilayer. Topologically, residues arginine 68–phenylalanine 304 are extracellular. Selenocysteine 170 is an active-site residue. Residue selenocysteine 170 is a non-standard amino acid, selenocysteine.

It belongs to the iodothyronine deiodinase family. As to quaternary structure, monomer. Homodimer. May undergo minor heretodimerization with DIO1 and DIO2.

The protein localises to the cell membrane. It is found in the endosome membrane. It carries out the reaction 3,3',5'-triiodo-L-thyronine + iodide + A + H(+) = L-thyroxine + AH2. The enzyme catalyses 3,3'-diiodo-L-thyronine + iodide + A + H(+) = 3,3',5-triiodo-L-thyronine + AH2. The catalysed reaction is 3-iodo-L-thyronine + iodide + A + H(+) = 3,5-diiodo-L-thyronine + AH2. It catalyses the reaction L-thyronine + iodide + A + H(+) = 3-iodo-L-thyronine + AH2. It carries out the reaction 3',5'-diiodo-L-thyronine + iodide + A + H(+) = 3,3',5'-triiodo-L-thyronine + AH2. The enzyme catalyses 3'-iodo-L-thyronine + iodide + A + H(+) = 3,3'-diiodo-L-thyronine + AH2. The catalysed reaction is 3,3',5'-triiodothyronamine + iodide + A + H(+) = 3,3',5,5'-tetraiodothyronamine + AH2. It catalyses the reaction 3',5'-diiodothyronamine + iodide + A + H(+) = 3,3',5'-triiodothyronamine + AH2. It carries out the reaction 3,3'-diiodothyronamine + iodide + A + H(+) = 3,3',5-triiodothyronamine + AH2. The enzyme catalyses 3-iodothyronamine + iodide + A + H(+) = 3,5-diiodothyronamine + AH2. The catalysed reaction is 3'-iodothyronamine + iodide + A + H(+) = 3,3'-diiodothyronamine + AH2. It catalyses the reaction thyronamine + iodide + A + H(+) = 3-iodothyronamine + AH2. In terms of biological role, plays a crucial role in the metabolism of thyroid hormones (TH) and has specific roles in TH activation and inactivation by deiodination. Catalyzes the deiodination of L-thyroxine (T4) to 3,3',5'-triiodothyronine (rT3), 3,5,3'-triiodothyronine (T3) to 3,3'-diiodothyronine (3,3'-T2), 3,5-diiodothyronine (3,5-T2) to 3-monoiodothyronine (3-T1), rT3 to 3',5'-diiodothyronine (3',5'-T2) and 3,3'-T2 to 3'-monoiodothyronine (3'-T1) via inner-ring deiodination (IRD). Catalyzes the deiodination of 3-T1 to L-thyronine (T0) via outer-ring deiodination (ORD). Catalyzes the tyrosyl ring deiodinations of 3,3',5,5'-tetraiodothyronamine, 3,3',5'-triiodothyronamine, 3,5,3'-triiodothyronamine, 3,5-diiodothyronamine, 3,3'-diiodothyronamine and 3-iodothyronamine. This chain is Thyroxine 5-deiodinase (Dio3), found in Mus musculus (Mouse).